Consider the following 361-residue polypeptide: Peptide chain release factor 1 (361 aa).

Gln-237 carries the post-translational modification N5-methylglutamine. Residues 286–306 (AKQDQEQAAKRKSLVGSGDRS) are disordered.

It belongs to the prokaryotic/mitochondrial release factor family. In terms of processing, methylated by PrmC. Methylation increases the termination efficiency of RF1.

The protein localises to the cytoplasm. Peptide chain release factor 1 directs the termination of translation in response to the peptide chain termination codons UAG and UAA. The chain is Peptide chain release factor 1 from Coxiella burnetii (strain CbuG_Q212) (Coxiella burnetii (strain Q212)).